The following is a 104-amino-acid chain: L-rhamnose mutarotase (104 aa).

Substrate is bound at residue Y18. The active-site Proton donor is the H22. Substrate contacts are provided by residues Y41 and 76 to 77; that span reads WW.

It belongs to the rhamnose mutarotase family. As to quaternary structure, homodimer.

It localises to the cytoplasm. The catalysed reaction is alpha-L-rhamnose = beta-L-rhamnose. It functions in the pathway carbohydrate metabolism; L-rhamnose metabolism. Functionally, involved in the anomeric conversion of L-rhamnose. The protein is L-rhamnose mutarotase of Oceanobacillus iheyensis (strain DSM 14371 / CIP 107618 / JCM 11309 / KCTC 3954 / HTE831).